A 407-amino-acid polypeptide reads, in one-letter code: SERPINE1 mRNA-binding protein 1 (407 aa).

A Phosphoserine modification is found at Ser25. A disordered region spans residues 33-227 (AAENKKKEAG…GSGSHNWGTV (195 aa)). Residues 51 to 68 (AKSAAQAAAQTNSNAAGK) are compositionally biased toward low complexity. Lys52 is modified (N6-acetyllysine; alternate). Lys52 is covalently cross-linked (Glycyl lysine isopeptide (Lys-Gly) (interchain with G-Cter in SUMO1); alternate). Lys68 carries the N6-acetyllysine modification. Composition is skewed to basic and acidic residues over residues 70–80 (LRKESQKDRKN), 89–114 (VDKK…RRPD), and 122–162 (KIID…DRPI). Lys102 participates in a covalent cross-link: Glycyl lysine isopeptide (Lys-Gly) (interchain with G-Cter in SUMO1); alternate. Lys102 is covalently cross-linked (Glycyl lysine isopeptide (Lys-Gly) (interchain with G-Cter in SUMO2)). Lys102 participates in a covalent cross-link: Glycyl lysine isopeptide (Lys-Gly) (interchain with G-Cter in SUMO2); alternate. An N6-acetyllysine mark is found at Lys122 and Lys140. Residues 164–182 (GRGGLGRGRGGRGRGMGRG) show a composition bias toward gly residues. Omega-N-methylarginine is present on residues Arg165 and Arg188. The span at 183-199 (DGFDSRGKREFDRHSGS) shows a compositional bias: basic and acidic residues. Phosphoserine occurs at positions 197, 199, 203, 205, and 208. Residue Lys211 is modified to N6-acetyllysine; alternate. Lys211 is covalently cross-linked (Glycyl lysine isopeptide (Lys-Gly) (interchain with G-Cter in SUMO2); alternate). Arg216 is modified (omega-N-methylarginine). Position 221 is a phosphoserine (Ser221). Thr226 bears the Phosphothreonine mark. Lys228 participates in a covalent cross-link: Glycyl lysine isopeptide (Lys-Gly) (interchain with G-Cter in SUMO1); alternate. Lys228 participates in a covalent cross-link: Glycyl lysine isopeptide (Lys-Gly) (interchain with G-Cter in SUMO2); alternate. Ser234 carries the post-translational modification Phosphoserine. Over residues 242–256 (ISYNCSDLDQSNVTE) the composition is skewed to polar residues. Disordered stretches follow at residues 242–291 (ISYN…TLDE) and 327–407 (SKSE…PALA). Residues 261 to 274 (GEEHPVADTENKEN) show a composition bias toward basic and acidic residues. Lys280 participates in a covalent cross-link: Glycyl lysine isopeptide (Lys-Gly) (interchain with G-Cter in SUMO1); alternate. Residue Lys280 forms a Glycyl lysine isopeptide (Lys-Gly) (interchain with G-Cter in SUMO2) linkage. A Glycyl lysine isopeptide (Lys-Gly) (interchain with G-Cter in SUMO2); alternate cross-link involves residue Lys280. 2 stretches are compositionally biased toward basic and acidic residues: residues 281–291 (EEGPKEMTLDE) and 327–341 (SKSE…VMDH). Lys328 carries the post-translational modification N6-acetyllysine. At Ser329 the chain carries Phosphoserine. A compositionally biased stretch (gly residues) spans 362–371 (GRPGRGGRGG). Omega-N-methylarginine occurs at positions 363, 366, and 369. 2 positions are modified to phosphoserine: Ser391 and Ser393.

Belongs to the SERBP1-HABP4 family. In terms of assembly, associates with mature 80S ribosomes. Interacts with EEF2/eEF2; interaction sequesters EEF2/eEF2 at the A-site of the ribosome, thereby blocking the interaction sites of the mRNA-tRNA complex, promoting ribosome stabilization and hibernation. Interacts with SPIN1. Interacts with CHD3 and TDRD3. Interacts with ZDHHC17 (via ANK repeats). Phosphorylation by MTOR inhibits SERBP1 and relieves ribosome hibernation.

Its function is as follows. Ribosome-binding protein that promotes ribosome hibernation, a process during which ribosomes are stabilized in an inactive state and preserved from proteasomal degradation. Acts via its association with EEF2/eEF2 factor, sequestering EEF2/eEF2 at the A-site of the ribosome and promoting ribosome stabilization and storage in an inactive state. May also play a role in the regulation of mRNA stability: binds to the 3'-most 134 nt of the SERPINE1/PAI1 mRNA, a region which confers cyclic nucleotide regulation of message decay. Seems to play a role in PML-nuclear bodies formation. This Oryctolagus cuniculus (Rabbit) protein is SERPINE1 mRNA-binding protein 1.